The chain runs to 149 residues: Protein SprT-like (149 aa).

The SprT-like domain occupies 4-143; the sequence is TDYVKQVSLE…CGLCRGKLLL (140 aa). H64 lines the Zn(2+) pocket. E65 is a catalytic residue. H68 contributes to the Zn(2+) binding site.

This sequence belongs to the SprT family. It depends on Zn(2+) as a cofactor.

The protein resides in the cytoplasm. The sequence is that of Protein SprT-like from Streptococcus pneumoniae (strain Taiwan19F-14).